Here is a 273-residue protein sequence, read N- to C-terminus: MKTFVTSWADEVDADYVDGLPPSNEYIKGDFKYVTEYKFNDDGKKVKVVRTFKIEKQIVPKAVARRRNWVKFGDSRSDKPGPNSQTTMASEEIFMQFIGSKDFDQTHETQLDPGKNIAKCRICNGEHWSVNCPYKGTSMDSKTVMETKANAAAAAAISDPSKTGKYVPPFMKDGGGISGSKNWGRGRDRDDSSAVRISNLSESMTETDLEELVKKIGPHTKMYLAREKNSGLCKGFAYVHFKFRQDAAAAIEVLNGHGYDHLILCVEWSKPQP.

Residues 193-271 form the RRM domain; the sequence is SAVRISNLSE…LILCVEWSKP (79 aa).

The protein belongs to the eIF-3 subunit G family. In terms of assembly, component of the eukaryotic translation initiation factor 3 (eIF-3) complex. The eIF-3 complex interacts with pix.

It is found in the cytoplasm. Its function is as follows. RNA-binding component of the eukaryotic translation initiation factor 3 (eIF-3) complex, which is involved in protein synthesis of a specialized repertoire of mRNAs and, together with other initiation factors, stimulates binding of mRNA and methionyl-tRNAi to the 40S ribosome. The eIF-3 complex specifically targets and initiates translation of a subset of mRNAs involved in cell proliferation. This subunit can bind 18S rRNA. This Drosophila melanogaster (Fruit fly) protein is Eukaryotic translation initiation factor 3 subunit G-2.